The chain runs to 337 residues: Phenylalanine--tRNA ligase alpha subunit (337 aa).

Mg(2+) is bound at residue Glu-252.

It belongs to the class-II aminoacyl-tRNA synthetase family. Phe-tRNA synthetase alpha subunit type 1 subfamily. In terms of assembly, tetramer of two alpha and two beta subunits. Mg(2+) is required as a cofactor.

It is found in the cytoplasm. The catalysed reaction is tRNA(Phe) + L-phenylalanine + ATP = L-phenylalanyl-tRNA(Phe) + AMP + diphosphate + H(+). The chain is Phenylalanine--tRNA ligase alpha subunit from Francisella tularensis subsp. mediasiatica (strain FSC147).